A 100-amino-acid chain; its full sequence is UPF0213 protein YhbQ (100 aa).

One can recognise a GIY-YIG domain in the interval threonine 2 to arginine 77.

It belongs to the UPF0213 family.

This chain is UPF0213 protein YhbQ, found in Escherichia coli (strain K12 / MC4100 / BW2952).